A 348-amino-acid polypeptide reads, in one-letter code: Phosphate acyltransferase (348 aa).

The protein belongs to the PlsX family. As to quaternary structure, homodimer. Probably interacts with PlsY.

Its subcellular location is the cytoplasm. It carries out the reaction a fatty acyl-[ACP] + phosphate = an acyl phosphate + holo-[ACP]. It participates in lipid metabolism; phospholipid metabolism. Catalyzes the reversible formation of acyl-phosphate (acyl-PO(4)) from acyl-[acyl-carrier-protein] (acyl-ACP). This enzyme utilizes acyl-ACP as fatty acyl donor, but not acyl-CoA. This chain is Phosphate acyltransferase, found in Francisella tularensis subsp. novicida (strain U112).